The sequence spans 380 residues: Phosphate acyltransferase (380 aa).

Residues 1–23 (MPSPPPTPETATASDRTATPAPG) form a disordered region.

This sequence belongs to the PlsX family. In terms of assembly, homodimer. Probably interacts with PlsY.

The protein localises to the cytoplasm. It carries out the reaction a fatty acyl-[ACP] + phosphate = an acyl phosphate + holo-[ACP]. The protein operates within lipid metabolism; phospholipid metabolism. In terms of biological role, catalyzes the reversible formation of acyl-phosphate (acyl-PO(4)) from acyl-[acyl-carrier-protein] (acyl-ACP). This enzyme utilizes acyl-ACP as fatty acyl donor, but not acyl-CoA. This chain is Phosphate acyltransferase, found in Acidiphilium cryptum (strain JF-5).